Here is a 320-residue protein sequence, read N- to C-terminus: Cytochrome f (320 aa).

Positions 1 to 35 (MQTRKTFSWIKEQINRSISVSLMIYIITRPSISIA) are cleaved as a signal peptide. Residues tyrosine 36, cysteine 56, cysteine 59, and histidine 60 each coordinate heme. The helical transmembrane segment at 286–306 (VQGLLFFLASVILAQIFLVLK) threads the bilayer.

Belongs to the cytochrome f family. As to quaternary structure, the 4 large subunits of the cytochrome b6-f complex are cytochrome b6, subunit IV (17 kDa polypeptide, petD), cytochrome f and the Rieske protein, while the 4 small subunits are PetG, PetL, PetM and PetN. The complex functions as a dimer. Heme is required as a cofactor.

The protein localises to the plastid. Its subcellular location is the chloroplast thylakoid membrane. Its function is as follows. Component of the cytochrome b6-f complex, which mediates electron transfer between photosystem II (PSII) and photosystem I (PSI), cyclic electron flow around PSI, and state transitions. The chain is Cytochrome f from Daucus carota (Wild carrot).